The chain runs to 179 residues: Guanosine-3',5'-bis(diphosphate) 3'-pyrophosphohydrolase MESH1 (179 aa).

An N-acetylglycine modification is found at glycine 2. Lysine 25 carries the post-translational modification N6-acetyllysine. Residues 32 to 127 (YINHPIGVAR…VKLADKLYNL (96 aa)) enclose the HD domain. Histidine 35, histidine 61, and aspartate 62 together coordinate Mn(2+). Active-site nucleophile residues include glutamate 65 and aspartate 66. Lysine 97 carries the N6-acetyllysine modification. Residue aspartate 122 coordinates Mn(2+). Lysine 123 bears the N6-acetyllysine mark.

Belongs to the MESH1 family. It depends on Mn(2+) as a cofactor.

The catalysed reaction is guanosine 3',5'-bis(diphosphate) + H2O = GDP + diphosphate + H(+). Its function is as follows. ppGpp hydrolyzing enzyme involved in starvation response. The sequence is that of Guanosine-3',5'-bis(diphosphate) 3'-pyrophosphohydrolase MESH1 (HDDC3) from Homo sapiens (Human).